A 139-amino-acid polypeptide reads, in one-letter code: METKWLLSKVPDDKSRFEIELEFVQMLSNPWYLNFLAQHKYFEDEAFLQYLEYMEYWREPEYVKFIIYPTCLHMLTLLKNPQFRNDISRADLSKQVNDEIYYEWLGKGLQQYGSADDATLSQPQQEEDEKKVDVKKENE.

The tract at residues 115 to 139 (ADDATLSQPQQEEDEKKVDVKKENE) is disordered. Residues 128–139 (DEKKVDVKKENE) show a composition bias toward basic and acidic residues.

This sequence belongs to the Mediator complex subunit 31 family. Component of the Mediator complex.

Its subcellular location is the nucleus. Its function is as follows. Component of the Mediator complex, a coactivator involved in the regulated transcription of nearly all RNA polymerase II-dependent genes. Mediator functions as a bridge to convey information from gene-specific regulatory proteins to the basal RNA polymerase II transcription machinery. Mediator is recruited to promoters by direct interactions with regulatory proteins and serves as a scaffold for the assembly of a functional preinitiation complex with RNA polymerase II and the general transcription factors. This chain is Mediator of RNA polymerase II transcription subunit 31 (med31), found in Schizosaccharomyces pombe (strain 972 / ATCC 24843) (Fission yeast).